The chain runs to 907 residues: Whirlin (907 aa).

Residues 140 to 223 (LVSLRRAKAH…LVLSVYSAGR (84 aa)) enclose the PDZ 1 domain. A disordered region spans residues 243 to 264 (SISPPSGLPQPHGGALRQQEGD). Positions 279 to 361 (KVNLVLGDGR…LILTVKDVGR (83 aa)) constitute a PDZ 2 domain. 4 disordered regions span residues 502 to 540 (SMKARQPPGPGAGDTYSMVSYSDTGSSTGSHGTSTTVSS), 565 to 663 (SVDD…SSKR), 684 to 717 (QSPPHLKSPSAEATVAGGCLLPPSPSGHPDQTGT), and 742 to 815 (PQTR…PTST). The segment covering 521–540 (SYSDTGSSTGSHGTSTTVSS) has biased composition (low complexity). Over residues 609–626 (PPSSMPSCSGTVFSAPQN) the composition is skewed to polar residues. Residues 628–642 (SPPAGTAPTPGTSSA) show a composition bias toward low complexity. Residue S685 is modified to Phosphoserine. A compositionally biased stretch (polar residues) spans 743–762 (QTRTASTLSQLSDSGQTLSE). Positions 789 to 800 (SSKELPRNERPT) are enriched in basic and acidic residues. One can recognise a PDZ 3 domain in the interval 816–899 (LVRVKKSAAT…TKDRDYIDFL (84 aa)).

In terms of assembly, forms homooligomers. Interacts (via C-terminal PDZ domain) with MYO15A; this interaction is necessary for localization of WHRN to stereocilia tips. Interacts (via C-terminal PDZ domain) with MPP1/p55. Interacts with LRRC4C/NGL1. Interacts with MYO7A. Interacts with RPGR. Interacts with EPS8. Interacts with CASK. Interacts with CIB2. Component of USH2 complex, composed of ADGRV1, PDZD7, USH2A and WHRN. Interacts (via PDZ domains) with PDZD7; the interaction is direct. Interacts (via N-terminal PDZ domain) with USH2A (via cytoplasmic region). Interacts with ADGRV1/MASS1 (via cytoplasmic region).

It localises to the cytoplasm. Its subcellular location is the cell projection. It is found in the stereocilium. The protein localises to the growth cone. The protein resides in the photoreceptor inner segment. It localises to the synapse. Functionally, involved in hearing and vision as member of the USH2 complex. Necessary for elongation and maintenance of inner and outer hair cell stereocilia in the organ of Corti in the inner ear. Involved in the maintenance of the hair bundle ankle region, which connects stereocilia in cochlear hair cells of the inner ear. In retina photoreceptors, required for the maintenance of periciliary membrane complex that seems to play a role in regulating intracellular protein transport. The protein is Whirlin of Homo sapiens (Human).